Consider the following 131-residue polypeptide: MEIKRVGSQASGKGPADWFTGTVRIDPLFQAPDPALVAGASVTFEPGARTAWHTHPLGQTLIVTAGCGWAQREGGAVEEIHPGDVVWFSPGEKHWHGAAPTTAMTHLAIQERLDGKAVDWMEHVTDEQYRR.

One can recognise a Cupin type-2 domain in the interval 42-104 (VTFEPGARTA…WHGAAPTTAM (63 aa)). His53, His55, Gln59, His94, and His96 together coordinate Mn(2+).

This sequence belongs to the cupin domain-containing hydroxynitrile lyase family. Mn(2+) is required as a cofactor.

The enzyme catalyses (R)-mandelonitrile = benzaldehyde + hydrogen cyanide. Its function is as follows. Hydroxynitrile lyase which catalyzes mandelonitrile formation from benzaldehyde and hydrogen cyanide with high stereoselectivity in presence of manganese. This is (R)-mandelonitrile lyase from Granulicella tundricola (strain ATCC BAA-1859 / DSM 23138 / MP5ACTX9).